The primary structure comprises 166 residues: HTH-type transcriptional regulator PecS (166 aa).

The region spanning 25 to 160 is the HTH marR-type domain; that stretch reads PMLVIGTLSR…LRALLGRVEK (136 aa).

Its subcellular location is the cytoplasm. With respect to regulation, the presence of PecM is required to ensure the full regulation of the pecS-pecM intergenic region by PecS. Its function is as follows. Negatively regulates the expression of genes encoding pectinase and cellulase, which play a major role in virulence, and the expression of the blue pigment indigoidine, which is implicated in pathogenicity and protection from oxidative stress. Represses the expression of genes involved in indigoidine biosynthesis by binding to indA and indC promoter regions. Also binds to promoter sites in the pecS-pecM intergenic region and negatively autoregulates its expression as well as that of pecM. The protein is HTH-type transcriptional regulator PecS of Dickeya dadantii (strain 3937) (Erwinia chrysanthemi (strain 3937)).